The primary structure comprises 470 residues: Neuraminidase (470 aa).

Topologically, residues 1–14 (MNPNQKIITIGSIS) are intravirion. Positions 11-32 (GSISLGLVVFNVLLHVVSIIVT) are involved in apical transport and lipid raft association. Residues 15 to 35 (LGLVVFNVLLHVVSIIVTVLV) traverse the membrane as a helical segment. The hypervariable stalk region stretch occupies residues 32–86 (TVLVLGRGGKNRICNETVVREYNETVRIEKVTQWHNTNVIEYVPYWNEGTYMNNT). The Virion surface portion of the chain corresponds to 36-470 (LGRGGKNRIC…AILPFDIDKM (435 aa)). Asn46, Asn54, and Asn84 each carry an N-linked (GlcNAc...) asparagine; by host glycan. Residues 89-470 (ICDVKGFAPF…AILPFDIDKM (382 aa)) form a head of neuraminidase region. 8 cysteine pairs are disulfide-bonded: Cys90/Cys417, Cys122/Cys127, Cys182/Cys229, Cys231/Cys236, Cys277/Cys290, Cys279/Cys288, Cys316/Cys335, and Cys421/Cys446. Arg116 serves as a coordination point for substrate. The N-linked (GlcNAc...) asparagine; by host glycan is linked to Asn144. The active-site Proton donor/acceptor is the Asp149. Substrate is bound at residue Arg150. Position 275-276 (275-276 (EE)) interacts with substrate. Arg291 is a binding site for substrate. Asp292 is a binding site for Ca(2+). A glycan (N-linked (GlcNAc...) asparagine; by host) is linked at Asn293. The Ca(2+) site is built by Gly296 and Asp322. Substrate is bound at residue Arg368. An N-linked (GlcNAc...) asparagine; by host glycan is attached at Asn398. Catalysis depends on Tyr402, which acts as the Nucleophile.

It belongs to the glycosyl hydrolase 34 family. As to quaternary structure, homotetramer. Ca(2+) is required as a cofactor. Post-translationally, N-glycosylated.

It localises to the virion membrane. It is found in the host apical cell membrane. It catalyses the reaction Hydrolysis of alpha-(2-&gt;3)-, alpha-(2-&gt;6)-, alpha-(2-&gt;8)- glycosidic linkages of terminal sialic acid residues in oligosaccharides, glycoproteins, glycolipids, colominic acid and synthetic substrates.. Inhibited by the neuraminidase inhibitors zanamivir (Relenza) and oseltamivir (Tamiflu). These drugs interfere with the release of progeny virus from infected cells and are effective against all influenza strains. Resistance to neuraminidase inhibitors is quite rare. Its function is as follows. Catalyzes the removal of terminal sialic acid residues from viral and cellular glycoconjugates. Cleaves off the terminal sialic acids on the glycosylated HA during virus budding to facilitate virus release. Additionally helps virus spread through the circulation by further removing sialic acids from the cell surface. These cleavages prevent self-aggregation and ensure the efficient spread of the progeny virus from cell to cell. Otherwise, infection would be limited to one round of replication. Described as a receptor-destroying enzyme because it cleaves a terminal sialic acid from the cellular receptors. May facilitate viral invasion of the upper airways by cleaving the sialic acid moieties on the mucin of the airway epithelial cells. Likely to plays a role in the budding process through its association with lipid rafts during intracellular transport. May additionally display a raft-association independent effect on budding. Plays a role in the determination of host range restriction on replication and virulence. Sialidase activity in late endosome/lysosome traffic seems to enhance virus replication. The chain is Neuraminidase from Influenza A virus (strain A/Equine/Jillin/1/1989 H3N8).